Consider the following 427-residue polypeptide: DNA topoisomerase 6 subunit A (427 aa).

The Topo IIA-type catalytic domain occupies 76 to 209 (LSLSSVQTEI…LNVIAAEKGV (134 aa)). Tyrosine 170 functions as the O-(5'-phospho-DNA)-tyrosine intermediate in the catalytic mechanism. Mg(2+) is bound by residues glutamate 256 and aspartate 308.

This sequence belongs to the TOP6A family. As to quaternary structure, homodimer. Heterotetramer of two TOP6A and two TOP6B subunits. Interacts with BIN4 and RHL1. Requires Mg(2+) as cofactor. As to expression, highly expressed in leaves, stems, flowers and seedlings.

It localises to the nucleus. It carries out the reaction ATP-dependent breakage, passage and rejoining of double-stranded DNA.. Its function is as follows. Component of the DNA topoisomerase VI involved in chromatin organization and progression of endoreduplication cycles. Relaxes both positive and negative superturns and exhibits a strong decatenase activity. Involved in cell-elongation processes. In Arabidopsis thaliana (Mouse-ear cress), this protein is DNA topoisomerase 6 subunit A.